The following is a 118-amino-acid chain: Small ribosomal subunit protein uS10 (118 aa).

Position 37 is a phosphoserine (serine 37).

It belongs to the universal ribosomal protein uS10 family. In terms of assembly, component of the small ribosomal subunit (SSU). Mature yeast ribosomes consist of a small (40S) and a large (60S) subunit. The 40S small subunit contains 1 molecule of ribosomal RNA (18S rRNA) and at least 33 different proteins. The large 60S subunit contains 3 rRNA molecules (25S, 5.8S and 5S rRNA) and at least 46 different proteins.

It is found in the cytoplasm. Functionally, component of the ribosome, a large ribonucleoprotein complex responsible for the synthesis of proteins in the cell. The small ribosomal subunit (SSU) binds messenger RNAs (mRNAs) and translates the encoded message by selecting cognate aminoacyl-transfer RNA (tRNA) molecules. The large subunit (LSU) contains the ribosomal catalytic site termed the peptidyl transferase center (PTC), which catalyzes the formation of peptide bonds, thereby polymerizing the amino acids delivered by tRNAs into a polypeptide chain. The nascent polypeptides leave the ribosome through a tunnel in the LSU and interact with protein factors that function in enzymatic processing, targeting, and the membrane insertion of nascent chains at the exit of the ribosomal tunnel. The chain is Small ribosomal subunit protein uS10 (rps20) from Schizosaccharomyces pombe (strain 972 / ATCC 24843) (Fission yeast).